A 100-amino-acid chain; its full sequence is Urease subunit gamma (100 aa).

Belongs to the urease gamma subunit family. As to quaternary structure, heterotrimer of UreA (gamma), UreB (beta) and UreC (alpha) subunits. Three heterotrimers associate to form the active enzyme.

The protein localises to the cytoplasm. The catalysed reaction is urea + 2 H2O + H(+) = hydrogencarbonate + 2 NH4(+). Its pathway is nitrogen metabolism; urea degradation; CO(2) and NH(3) from urea (urease route): step 1/1. The chain is Urease subunit gamma from Haemophilus influenzae (strain 86-028NP).